A 353-amino-acid chain; its full sequence is Nicotinate-nucleotide--dimethylbenzimidazole phosphoribosyltransferase (353 aa).

The active-site Proton acceptor is glutamate 318.

This sequence belongs to the CobT family.

It carries out the reaction 5,6-dimethylbenzimidazole + nicotinate beta-D-ribonucleotide = alpha-ribazole 5'-phosphate + nicotinate + H(+). It functions in the pathway nucleoside biosynthesis; alpha-ribazole biosynthesis; alpha-ribazole from 5,6-dimethylbenzimidazole: step 1/2. In terms of biological role, catalyzes the synthesis of alpha-ribazole-5'-phosphate from nicotinate mononucleotide (NAMN) and 5,6-dimethylbenzimidazole (DMB). The chain is Nicotinate-nucleotide--dimethylbenzimidazole phosphoribosyltransferase from Geobacter metallireducens (strain ATCC 53774 / DSM 7210 / GS-15).